Reading from the N-terminus, the 150-residue chain is Leukotriene C4 synthase (150 aa).

Topologically, residues 1-6 (MKDEVA) are cytoplasmic. Residues 7–27 (LLATVTLLGVLLQAYFSLQVI) form a helical membrane-spanning segment. Topologically, residues 28-48 (RARRAHRVSPPLTTGPPEFER) are lumenal. Glutathione is bound at residue arginine 30. Arginine 31 (proton donor) is an active-site residue. Residue serine 36 is modified to Phosphoserine. A helical membrane pass occupies residues 49-69 (VYRAQVNCSEYFPLFLATLWV). Residues 51–55 (RAQVN) and 58–59 (EY) contribute to the glutathione site. At 70–73 (AGVY) the chain is on the cytoplasmic side. A helical membrane pass occupies residues 74–94 (FHEGAAALCGLVYLFTRLRYF). Residue 93 to 97 (YFWGY) participates in glutathione binding. Over 95–104 (WGYARSAQLR) the chain is Lumenal. The Proton acceptor role is filled by arginine 104. The chain crosses the membrane as a helical span at residues 105-124 (LAPLYASARALWLLLALATL). The Cytoplasmic portion of the chain corresponds to 125 to 150 (GLLAHFLPAAARAALLRLLRALLRTA).

Belongs to the MAPEG family. Homotrimer. Interacts with ALOX5AP and ALOX5. In terms of processing, phosphorylation at Ser-36 by RPS6KB1 inhibits the leukotriene-C4 synthase activity.

It is found in the nucleus outer membrane. It localises to the endoplasmic reticulum membrane. Its subcellular location is the nucleus membrane. It carries out the reaction leukotriene C4 = leukotriene A4 + glutathione. It catalyses the reaction (13S,14S)-epoxy-(4Z,7Z,9E,11E,16Z,19Z)-docosahexaenoate + glutathione = (13R)-S-glutathionyl-(14S)-hydroxy-(4Z,7Z,9E,11E,16Z,19Z)-docosahexaenoate. Its pathway is lipid metabolism; leukotriene C4 biosynthesis. Inhibited by MK886. Functionally, catalyzes the conjugation of leukotriene A4 with reduced glutathione (GSH) to form leukotriene C4 with high specificity. Can also catalyze the transfer of a glutathionyl group from glutathione (GSH) to 13(S),14(S)-epoxy-docosahexaenoic acid to form maresin conjugate in tissue regeneration 1 (MCTR1), a bioactive lipid mediator that possess potent anti-inflammatory and proresolving actions. The protein is Leukotriene C4 synthase (LTC4S) of Cavia porcellus (Guinea pig).